The sequence spans 394 residues: Venom metalloproteinase antarease TserMP_A (394 aa).

The signal sequence occupies residues Met1 to Ala16. A propeptide spanning residues Val17–Arg157 is cleaved from the precursor. A Peptidase M12B domain is found at Ile162–Cys391. Cys295 and Cys386 are disulfide-bonded. His319 provides a ligand contact to Zn(2+). The active site involves Glu320. Zn(2+) is bound by residues His323 and His329.

Zn(2+) serves as cofactor. Post-translationally, contains 4 disulfide bonds. As to expression, expressed by the venom gland.

The protein localises to the secreted. Inhibited by EDTA. Functionally, acts as a metalloprotease. Penetrates intact tissue and specifically cleaves the vesicle-associated membrane protein 2 (VAMP2) (part of the SNARE complex) involved in pancreatic secretion, thus disrupting the normal vesicular traffic. The polypeptide is Venom metalloproteinase antarease TserMP_A (Tityus serrulatus (Brazilian scorpion)).